We begin with the raw amino-acid sequence, 370 residues long: MEILMTVSRIASICTMGANASALEKEIGPEQFPVNEHYFGLVNFGNTCYCNSVLQALYFCRPFREKVLAYKSQPRKKENLLTCLSDLFHSIATQKKKVGVIPPKKFITRLRKENELFDNYMQQDAHEFLNYLLNTIADILQEERKQEKQNGRIPNGNIDNENNNNTPDPTWVHEIFQGTLTNETRCLTCETISSKDEDFLDLSVDVEQNTSITHCLRGFSNTETLCSEYKYYCEECRSKQEAHKRMKVKKLPMILALHLKRFKYMDQLHRYTKLSYRVVFPLELRLFNTSGDATNPDRMYDLVAVVVHCGSGPNRGHYIAIVKSHDFWLLFDDDIVEKIDAQAIEEFYGLTSDISKNSESGYILFYQSRD.

The region spanning 39–369 is the USP domain; that stretch reads FGLVNFGNTC…SGYILFYQSR (331 aa). Residue cysteine 48 is the Nucleophile of the active site. The segment at 145 to 168 is disordered; sequence KQEKQNGRIPNGNIDNENNNNTPD. Low complexity predominate over residues 155 to 165; the sequence is NGNIDNENNNN. Zn(2+) contacts are provided by cysteine 186, cysteine 189, cysteine 233, and cysteine 236. Histidine 317 (proton acceptor) is an active-site residue.

The protein belongs to the peptidase C19 family. USP12/USP46 subfamily. Interacts with WDR48.

It catalyses the reaction Thiol-dependent hydrolysis of ester, thioester, amide, peptide and isopeptide bonds formed by the C-terminal Gly of ubiquitin (a 76-residue protein attached to proteins as an intracellular targeting signal).. Its function is as follows. Deubiquitinating enzyme. Has almost no deubiquitinating activity by itself and requires the interaction with wdr48 to have a high activity. The polypeptide is Ubiquitin carboxyl-terminal hydrolase 12-B (usp12-b) (Xenopus laevis (African clawed frog)).